A 315-amino-acid chain; its full sequence is Homoserine kinase (315 aa).

Residue 97–107 (PPARGLGSSAT) participates in ATP binding.

This sequence belongs to the GHMP kinase family. Homoserine kinase subfamily.

The protein resides in the cytoplasm. The catalysed reaction is L-homoserine + ATP = O-phospho-L-homoserine + ADP + H(+). It participates in amino-acid biosynthesis; L-threonine biosynthesis; L-threonine from L-aspartate: step 4/5. In terms of biological role, catalyzes the ATP-dependent phosphorylation of L-homoserine to L-homoserine phosphate. This Prochlorococcus marinus (strain SARG / CCMP1375 / SS120) protein is Homoserine kinase.